A 712-amino-acid chain; its full sequence is Aryl hydrocarbon receptor nuclear translocator 2 (712 aa).

Disordered stretches follow at residues 1-20 (MATP…PGSV) and 35-74 (MAGA…IERR). Arg-42 is subject to Omega-N-methylarginine. Residues 63 to 73 (FSRENHSEIER) are compositionally biased toward basic and acidic residues. The bHLH domain occupies 63 to 116 (FSRENHSEIERRRRNKMTQYITELSDMVPTCSALARKPDKLTILRMAVSHMKSM). PAS domains lie at 134–209 (TEQE…MTGR) and 323–393 (PVCM…VKLK). Residues 398–441 (SVMYRFRTKNREWLLIRTSSFTFQNPYSDEIEYVICTNTNVKQL) form the PAC domain. The interval 573 to 712 (AWTGSRPPFP…DLGMFPPFSE (140 aa)) is disordered. Composition is skewed to low complexity over residues 597-626 (SSHP…AYPS) and 653-675 (SQWQ…QPGQ).

Efficient DNA binding requires dimerization with another bHLH protein. Heterodimer with NPAS4 or SIM1. Heterodimer with the aryl hydrocarbon receptor (AHR) or the SIM1 protein. Interacts with TACC3.

The protein resides in the nucleus. In terms of biological role, transcription factor that plays a role in the development of the hypothalamo-pituitary axis, postnatal brain growth, and visual and renal function. Specifically recognizes the xenobiotic response element (XRE). This Rattus norvegicus (Rat) protein is Aryl hydrocarbon receptor nuclear translocator 2 (Arnt2).